The following is a 415-amino-acid chain: Tyrosine--tRNA ligase (415 aa).

Y34 contributes to the L-tyrosine binding site. A 'HIGH' region motif is present at residues P39–N48. L-tyrosine-binding residues include Y162 and Q166. The 'KMSKS' region motif lies at K224 to S228. K227 lines the ATP pocket. Residues I346–N413 form the S4 RNA-binding domain.

It belongs to the class-I aminoacyl-tRNA synthetase family. TyrS type 1 subfamily. Homodimer.

It is found in the cytoplasm. It carries out the reaction tRNA(Tyr) + L-tyrosine + ATP = L-tyrosyl-tRNA(Tyr) + AMP + diphosphate + H(+). Catalyzes the attachment of tyrosine to tRNA(Tyr) in a two-step reaction: tyrosine is first activated by ATP to form Tyr-AMP and then transferred to the acceptor end of tRNA(Tyr). This chain is Tyrosine--tRNA ligase, found in Ureaplasma parvum serovar 3 (strain ATCC 27815 / 27 / NCTC 11736).